Consider the following 186-residue polypeptide: MNREEALACVKQQLTEHRYIHTVGVMNTAIELAERFGADSKKAEIAAIFHDYAKFRPKEEMKQIIAREKMPAHLLDHNPELWHAPVGAYLVQREAGVQDEDILDAIRYHTSGRPGMTLLEKVIYVADYIEPNRAFPGVDEVRKLAETDLNQALIQSIKNTMVFLMKKNQPVFPDTFLTYNWLVSGS.

Residues R18–N132 form the HD domain. H21 contacts ADP. Fe cation-binding residues include H21, H50, and D51. ADP is bound by residues D51–K54, H83, H109–T110, D127, R133, and P170–T175. D127 provides a ligand contact to Fe cation.

It belongs to the Ap4A hydrolase YqeK family. Homodimer.

It carries out the reaction P(1),P(4)-bis(5'-adenosyl) tetraphosphate + H2O = 2 ADP + 2 H(+). Functionally, hydrolyzes diadenosine 5',5'''-P1,P4-tetraphosphate (Ap4A) to yield ADP. The chain is Bis(5'-nucleosyl)-tetraphosphatase, symmetrical (yqeK) from Bacillus subtilis (strain 168).